The sequence spans 267 residues: Pyridoxine/pyridoxamine 5'-phosphate oxidase (267 aa).

Residues 20–23 (RQGY) and K80 contribute to the substrate site. FMN is bound by residues 75-80 (RTVLLK), 90-91 (YT), R96, K97, and Q119. Residues Y137, R141, and S145 each contribute to the substrate site. FMN is bound by residues 154–155 (QS) and W200. 206–208 (RLH) provides a ligand contact to substrate. R210 provides a ligand contact to FMN.

The protein belongs to the pyridoxamine 5'-phosphate oxidase family. In terms of assembly, homodimer. It depends on FMN as a cofactor.

It carries out the reaction pyridoxamine 5'-phosphate + O2 + H2O = pyridoxal 5'-phosphate + H2O2 + NH4(+). The enzyme catalyses pyridoxine 5'-phosphate + O2 = pyridoxal 5'-phosphate + H2O2. It functions in the pathway cofactor metabolism; pyridoxal 5'-phosphate salvage; pyridoxal 5'-phosphate from pyridoxamine 5'-phosphate: step 1/1. Its pathway is cofactor metabolism; pyridoxal 5'-phosphate salvage; pyridoxal 5'-phosphate from pyridoxine 5'-phosphate: step 1/1. Its function is as follows. Catalyzes the oxidation of either pyridoxine 5'-phosphate (PNP) or pyridoxamine 5'-phosphate (PMP) into pyridoxal 5'-phosphate (PLP). The chain is Pyridoxine/pyridoxamine 5'-phosphate oxidase from Frankia casuarinae (strain DSM 45818 / CECT 9043 / HFP020203 / CcI3).